The following is a 526-amino-acid chain: Trigger factor (526 aa).

The region spanning 162-243 (GDFVSIDLSA…LGSVKERELP (82 aa)) is the PPIase FKBP-type domain. Positions 425-460 (DTDGADVDPKEYFGDVEAEGDKADKAETDKAEEKPK) are enriched in basic and acidic residues. A disordered region spans residues 425-526 (DTDGADVDPK…AKKAAEKKED (102 aa)). Basic residues predominate over residues 461 to 517 (KAPAKKSTTKKSTAKKSTAKKSTAKKSTAKKSTAKKSTTKKATKSTAKKSTAKKTTA).

The protein belongs to the FKBP-type PPIase family. Tig subfamily.

The protein resides in the cytoplasm. The catalysed reaction is [protein]-peptidylproline (omega=180) = [protein]-peptidylproline (omega=0). Involved in protein export. Acts as a chaperone by maintaining the newly synthesized protein in an open conformation. Functions as a peptidyl-prolyl cis-trans isomerase. The chain is Trigger factor from Corynebacterium jeikeium (strain K411).